The following is a 98-amino-acid chain: Gene 4 protein (98 aa).

The HNH domain occupies 38–73 (GCVRAATDVDHIKRGNDHSRSNLQAACHVCHGKKSA). The interval 75–98 (EGVARRRELRARRKRPPERHPGRR) is disordered. A compositionally biased stretch (basic residues) spans 81-98 (RELRARRKRPPERHPGRR).

In Mycobacterium (Mycobacteriophage L5), this protein is Gene 4 protein (4).